Here is a 173-residue protein sequence, read N- to C-terminus: NADH-ubiquinone oxidoreductase chain 6 (173 aa).

5 consecutive transmembrane segments (helical) span residues 1–21, 27–47, 48–68, 87–107, and 139–159; these read MTYF…AVAS, YGVV…MSLG, MSFV…VVFV, VVGY…VGGL, and CGVG…FVVL.

The protein belongs to the complex I subunit 6 family.

Its subcellular location is the mitochondrion membrane. It carries out the reaction a ubiquinone + NADH + 5 H(+)(in) = a ubiquinol + NAD(+) + 4 H(+)(out). In terms of biological role, core subunit of the mitochondrial membrane respiratory chain NADH dehydrogenase (Complex I) that is believed to belong to the minimal assembly required for catalysis. Complex I functions in the transfer of electrons from NADH to the respiratory chain. The immediate electron acceptor for the enzyme is believed to be ubiquinone. This Synthliboramphus antiquus (Ancient murrelet) protein is NADH-ubiquinone oxidoreductase chain 6 (MT-ND6).